The primary structure comprises 301 residues: Vomeronasal type-1 receptor 4 (301 aa).

The Extracellular portion of the chain corresponds to 1 to 5 (MASRY). Residues 6-26 (VAVGMILSQTVVGVLGSFSVL) traverse the membrane as a helical segment. Residues 27 to 48 (LHYLSFYCTGCRLRSTDLIVKH) are Cytoplasmic-facing. The helical transmembrane segment at 49–69 (LIVANFLALRCKGVPQTMAAF) threads the bilayer. Topologically, residues 70 to 88 (GVRYFLNALGCKLVFYLHR) are extracellular. The chain crosses the membrane as a helical span at residues 89–109 (VGRGVSIGTTCLLSVFQVITV). Over 110 to 126 (SSRKSRWAKLKEKAPKH) the chain is Cytoplasmic. Residues 127-147 (VGFSVLLCWIVCMLVNIIFPM) traverse the membrane as a helical segment. Topologically, residues 148–185 (YVTGKWNYTNITVNEDLGYCSGGGNNKIAQTLRAMLLS) are extracellular. N-linked (GlcNAc...) asparagine glycosylation is found at N154 and N157. Residues 186-206 (FPDVLCLGLMLWVSSSMVCIL) form a helical membrane-spanning segment. Residues 207–234 (HRHKQRVQHIDRSNLSPRASPENRATQS) lie on the Cytoplasmic side of the membrane. The helical transmembrane segment at 235–255 (ILILVSTFVSSYTLSCLFQVC) threads the bilayer. Residues 256–264 (MALLDNPNS) are Extracellular-facing. The chain crosses the membrane as a helical span at residues 265-285 (LLVNTSALMSVCFPTLSPFVL). Over 286-301 (MSCDPSVYRFCFAWKR) the chain is Cytoplasmic.

The protein belongs to the G-protein coupled receptor 1 family.

The protein resides in the cell membrane. In terms of biological role, putative pheromone receptor. The protein is Vomeronasal type-1 receptor 4 (VN1R4) of Homo sapiens (Human).